Reading from the N-terminus, the 248-residue chain is Trypsin I-P1 (248 aa).

The signal sequence occupies residues 1-15 (MKFLVLVAFVGVTVA). Residues 16–25 (FPISDEDDDK) constitute a propeptide, activation peptide. The Peptidase S1 domain maps to 26–246 (IVGGYSCARS…YVSWIKTTMS (221 aa)). Disulfide bonds link C32–C162, C50–C66, C134–C235, C141–C208, C173–C187, and C198–C222. H65 serves as the catalytic Charge relay system. Residues E77, N79, and E87 each contribute to the Ca(2+) site. D109 serves as the catalytic Charge relay system. The active-site Charge relay system is S202.

This sequence belongs to the peptidase S1 family. The cofactor is Ca(2+). High levels are seen in the pancreas while lower levels are found in the liver, spleen and thymus.

The protein localises to the secreted. It is found in the extracellular space. It catalyses the reaction Preferential cleavage: Arg-|-Xaa, Lys-|-Xaa.. The sequence is that of Trypsin I-P1 from Gallus gallus (Chicken).